The primary structure comprises 139 residues: Actin-depolymerizing factor (139 aa).

The 135-residue stretch at 5 to 139 (SSGMAVDDEC…SMDIIKARAF (135 aa)) folds into the ADF-H domain.

It belongs to the actin-binding proteins ADF family. In terms of tissue distribution, preferentially in mature anther.

Functionally, actin-depolymerizing protein. Severs actin filaments (F-actin) and binds to actin monomers. The protein is Actin-depolymerizing factor of Lilium longiflorum (Trumpet lily).